The primary structure comprises 53 residues: Rubredoxin-1 (53 aa).

A Rubredoxin-like domain is found at 1 to 53 (MEKFVCDVCGYIYDPVVGDPDNGVAPGTKFKDIPDTWVCPLCKLDKTHFSKVE). The Fe cation site is built by cysteine 6, cysteine 9, cysteine 39, and cysteine 42.

It belongs to the rubredoxin family. Fe(3+) is required as a cofactor.

Rubredoxin is a small nonheme, iron protein lacking acid-labile sulfide. Its single Fe, chelated to 4 Cys, functions as an electron acceptor and may also stabilize the conformation of the molecule. The sequence is that of Rubredoxin-1 (rubR1) from Clostridium perfringens (strain 13 / Type A).